The primary structure comprises 469 residues: 3-isopropylmalate dehydratase large subunit (469 aa).

[4Fe-4S] cluster is bound by residues Cys347, Cys408, and Cys411.

The protein belongs to the aconitase/IPM isomerase family. LeuC type 1 subfamily. In terms of assembly, heterodimer of LeuC and LeuD. [4Fe-4S] cluster serves as cofactor.

It carries out the reaction (2R,3S)-3-isopropylmalate = (2S)-2-isopropylmalate. It participates in amino-acid biosynthesis; L-leucine biosynthesis; L-leucine from 3-methyl-2-oxobutanoate: step 2/4. Its function is as follows. Catalyzes the isomerization between 2-isopropylmalate and 3-isopropylmalate, via the formation of 2-isopropylmaleate. This chain is 3-isopropylmalate dehydratase large subunit, found in Haemophilus influenzae (strain 86-028NP).